Consider the following 214-residue polypeptide: Putative pit accessory protein (214 aa).

It belongs to the UPF0111 family.

In terms of biological role, could be involved in orthophosphate transport. The protein is Putative pit accessory protein of Rhizobium meliloti (strain 1021) (Ensifer meliloti).